The chain runs to 310 residues: Tetrahydromethanopterin S-methyltransferase subunit H (310 aa).

The protein belongs to the MtrH family. In terms of assembly, the complex is composed of 8 subunits; MtrA, MtrB, MtrC, MtrD, MtrE, MtrF, MtrG and MtrH.

It catalyses the reaction 5-methyl-5,6,7,8-tetrahydromethanopterin + coenzyme M + 2 Na(+)(in) = 5,6,7,8-tetrahydromethanopterin + methyl-coenzyme M + 2 Na(+)(out). It functions in the pathway one-carbon metabolism; methanogenesis from CO(2); methyl-coenzyme M from 5,10-methylene-5,6,7,8-tetrahydromethanopterin: step 2/2. In terms of biological role, part of a complex that catalyzes the formation of methyl-coenzyme M and tetrahydromethanopterin from coenzyme M and methyl-tetrahydromethanopterin. This is an energy-conserving, sodium-ion translocating step. MtrH catalyzes the transfer of the methyl group from methyl-tetrahydromethanopterin to the corrinoid prosthetic group of MtrA. The polypeptide is Tetrahydromethanopterin S-methyltransferase subunit H (Methanothermobacter thermautotrophicus (strain ATCC 29096 / DSM 1053 / JCM 10044 / NBRC 100330 / Delta H) (Methanobacterium thermoautotrophicum)).